Here is a 440-residue protein sequence, read N- to C-terminus: C4-dicarboxylate transport protein (440 aa).

Transmembrane regions (helical) follow at residues 15 to 35, 46 to 66, 78 to 98, 146 to 166, 190 to 210, 224 to 244, 291 to 311, 332 to 352, and 354 to 374; these read VLVA…TGVA, LIKM…IAGM, YALL…LVVV, AFAN…GFAL, IINM…AFTI, LMAC…GGIC, VVGL…SIYL, ITLL…TGSG, and IVLA…LALI. The interval 420 to 440 is disordered; sequence GAPLVDTRPTDDLGVAEGPAR.

The protein belongs to the dicarboxylate/amino acid:cation symporter (DAACS) (TC 2.A.23) family.

The protein localises to the cell inner membrane. In terms of biological role, responsible for the transport of dicarboxylates such as succinate, fumarate, and malate from the periplasm across the membrane. The protein is C4-dicarboxylate transport protein of Pseudomonas putida (strain ATCC 700007 / DSM 6899 / JCM 31910 / BCRC 17059 / LMG 24140 / F1).